Reading from the N-terminus, the 223-residue chain is Urease accessory protein UreG (223 aa).

Positions 1-30 are disordered; sequence MAKHSHDHTHDHHDRPRRVRKPGEPLRIGV. Residue 32-39 coordinates GTP; sequence GPVGSGKT.

This sequence belongs to the SIMIBI class G3E GTPase family. UreG subfamily. Homodimer. UreD, UreF and UreG form a complex that acts as a GTP-hydrolysis-dependent molecular chaperone, activating the urease apoprotein by helping to assemble the nickel containing metallocenter of UreC. The UreE protein probably delivers the nickel.

It is found in the cytoplasm. In terms of biological role, facilitates the functional incorporation of the urease nickel metallocenter. This process requires GTP hydrolysis, probably effectuated by UreG. This is Urease accessory protein UreG from Mycobacterium ulcerans (strain Agy99).